A 179-amino-acid chain; its full sequence is Large ribosomal subunit protein uL6 (179 aa).

It belongs to the universal ribosomal protein uL6 family. As to quaternary structure, part of the 50S ribosomal subunit.

This protein binds to the 23S rRNA, and is important in its secondary structure. It is located near the subunit interface in the base of the L7/L12 stalk, and near the tRNA binding site of the peptidyltransferase center. The chain is Large ribosomal subunit protein uL6 from Akkermansia muciniphila (strain ATCC BAA-835 / DSM 22959 / JCM 33894 / BCRC 81048 / CCUG 64013 / CIP 107961 / Muc).